The sequence spans 131 residues: Profilin-6 (131 aa).

C13 and C115 are oxidised to a cystine. Residues 81–97 (VVIRGKKGAGGITIKKT) carry the Involved in PIP2 interaction motif. A Phosphothreonine modification is found at T111.

This sequence belongs to the profilin family. Occurs in many kinds of cells as a complex with monomeric actin in a 1:1 ratio. Phosphorylated by MAP kinases.

Its subcellular location is the cytoplasm. It is found in the cytoskeleton. In terms of biological role, binds to actin and affects the structure of the cytoskeleton. At high concentrations, profilin prevents the polymerization of actin, whereas it enhances it at low concentrations. The polypeptide is Profilin-6 (Corylus avellana (European hazel)).